Reading from the N-terminus, the 214-residue chain is Thymidylate kinase (214 aa).

An ATP-binding site is contributed by 10–17 (GGEGAGKS).

Belongs to the thymidylate kinase family.

It catalyses the reaction dTMP + ATP = dTDP + ADP. Phosphorylation of dTMP to form dTDP in both de novo and salvage pathways of dTTP synthesis. The protein is Thymidylate kinase of Brucella abortus (strain S19).